Consider the following 708-residue polypeptide: DNA ligase (708 aa).

Residues 35–39 (DADYD), 84–85 (SL), and Glu-118 each bind NAD(+). The active-site N6-AMP-lysine intermediate is the Lys-120. NAD(+) is bound by residues Arg-141, Glu-182, Lys-303, and Lys-327. Cys-419, Cys-422, Cys-437, and Cys-443 together coordinate Zn(2+). Residues 628-708 (TRASEVSGKT…GWAKIVADAQ (81 aa)) form the BRCT domain.

It belongs to the NAD-dependent DNA ligase family. LigA subfamily. Requires Mg(2+) as cofactor. Mn(2+) is required as a cofactor.

It carries out the reaction NAD(+) + (deoxyribonucleotide)n-3'-hydroxyl + 5'-phospho-(deoxyribonucleotide)m = (deoxyribonucleotide)n+m + AMP + beta-nicotinamide D-nucleotide.. In terms of biological role, DNA ligase that catalyzes the formation of phosphodiester linkages between 5'-phosphoryl and 3'-hydroxyl groups in double-stranded DNA using NAD as a coenzyme and as the energy source for the reaction. It is essential for DNA replication and repair of damaged DNA. The chain is DNA ligase from Rhizorhabdus wittichii (strain DSM 6014 / CCUG 31198 / JCM 15750 / NBRC 105917 / EY 4224 / RW1) (Sphingomonas wittichii).